The primary structure comprises 232 residues: Large ribosomal subunit protein uL1 (232 aa).

This sequence belongs to the universal ribosomal protein uL1 family. In terms of assembly, part of the 50S ribosomal subunit.

Binds directly to 23S rRNA. The L1 stalk is quite mobile in the ribosome, and is involved in E site tRNA release. In terms of biological role, protein L1 is also a translational repressor protein, it controls the translation of the L11 operon by binding to its mRNA. The protein is Large ribosomal subunit protein uL1 of Roseobacter denitrificans (strain ATCC 33942 / OCh 114) (Erythrobacter sp. (strain OCh 114)).